Consider the following 118-residue polypeptide: MSAPNSYDDEELEELLRRKAAQEQKRLEEERKRKAELESQKESILRVILTPEARQRLTNIKLVKPEFAESLENQLIALAQSGRIKVPLTDEELKQILEQISEQNRRDFKIQIRERGWK.

Belongs to the PDCD5 family.

The protein is DNA-binding protein M164_1799 of Saccharolobus islandicus (strain M.16.4 / Kamchatka #3) (Sulfolobus islandicus).